Here is a 350-residue protein sequence, read N- to C-terminus: UDP-3-O-acylglucosamine N-acyltransferase (350 aa).

The active-site Proton acceptor is histidine 240.

This sequence belongs to the transferase hexapeptide repeat family. LpxD subfamily. As to quaternary structure, homotrimer.

The catalysed reaction is a UDP-3-O-[(3R)-3-hydroxyacyl]-alpha-D-glucosamine + a (3R)-hydroxyacyl-[ACP] = a UDP-2-N,3-O-bis[(3R)-3-hydroxyacyl]-alpha-D-glucosamine + holo-[ACP] + H(+). It participates in bacterial outer membrane biogenesis; LPS lipid A biosynthesis. Catalyzes the N-acylation of UDP-3-O-acylglucosamine using 3-hydroxyacyl-ACP as the acyl donor. Is involved in the biosynthesis of lipid A, a phosphorylated glycolipid that anchors the lipopolysaccharide to the outer membrane of the cell. The polypeptide is UDP-3-O-acylglucosamine N-acyltransferase (Methylobacillus flagellatus (strain ATCC 51484 / DSM 6875 / VKM B-1610 / KT)).